Reading from the N-terminus, the 397-residue chain is GDP-mannose transporter 1 (397 aa).

The tract at residues 1 to 57 (MSKPFVPTPNISRPATPSSLDYGKDEASSTLLRDMGERGDRERKDREERDKKEAMPS) is disordered. The Cytoplasmic portion of the chain corresponds to 1–61 (MSKPFVPTPN…KEAMPSGQDQ (61 aa)). The span at 9-19 (PNISRPATPSS) shows a compositional bias: polar residues. The span at 34–54 (DMGERGDRERKDREERDKKEA) shows a compositional bias: basic and acidic residues. The chain crosses the membrane as a helical span at residues 62–82 (VLPILSYCAASIMMTVVNKYV). At 83-87 (VSGAN) the chain is on the lumenal side. Residue Asn-87 is glycosylated (N-linked (GlcNAc...) asparagine). A helical transmembrane segment spans residues 88–108 (FTMTFLLLAIQSSVCVLAVTT). The Cytoplasmic segment spans residues 109-124 (VKKLGFISFRDFDKND). Residues 125-142 (AKAWWPISTLLVAVIYTG) traverse the membrane as a helical segment. The Lumenal segment spans residues 143–145 (SKA). A helical membrane pass occupies residues 146 to 168 (LQFLSIPVYTIFKNLTIILIAYG). Residues 169–174 (EVFMFN) are Cytoplasmic-facing. Residues 175 to 197 (GAVSGLTLCSFALMVGSSIIAAW) form a helical membrane-spanning segment. Residues 198-228 (SDITSVWNKEPELDPITGLEITVGPVSTIGG) are Lumenal-facing. The helical transmembrane segment at 229–249 (LNAGYIWMALNCFVSAAYVLF) threads the bilayer. At 250–272 (MRKRIKVTGFKDWDSMYYNNLLS) the chain is on the cytoplasmic side. Residues 273–293 (IPILVVFSLVIEDWGSESLAL) form a helical membrane-spanning segment. Residues 294–300 (NFPASNR) lie on the Lumenal side of the membrane. The chain crosses the membrane as a helical span at residues 301 to 321 (VLLLSAMAFSGAAAVFISYST). Residues 322–332 (AWCVRITGSTT) lie on the Cytoplasmic side of the membrane. Residues 333 to 353 (YSMVGALNKLPVAASGILFFG) traverse the membrane as a helical segment. Residues 354–355 (DP) are Lumenal-facing. A helical transmembrane segment spans residues 356 to 376 (ANFGNISAIAVGGVAGVVYAV). Over 377-397 (AKTNQAKVEKARQARAAGGRP) the chain is Cytoplasmic.

The protein belongs to the TPT transporter family. SLC35D subfamily. Homooligomer.

Its subcellular location is the golgi apparatus membrane. The protein localises to the cytoplasmic vesicle membrane. It localises to the endoplasmic reticulum membrane. Involved in the import of GDP-mannose from the cytoplasm into the Golgi lumen. Involved in capsule synthesis. The polypeptide is GDP-mannose transporter 1 (GMT1) (Cryptococcus neoformans var. neoformans serotype D (strain B-3501A) (Filobasidiella neoformans)).